Reading from the N-terminus, the 375-residue chain is All-trans-retinol dehydrogenase [NAD(+)] ADH1B (375 aa).

Ser-2 bears the N-acetylserine mark. Phosphoserine is present on Ser-23. Tyr-35 bears the Phosphotyrosine mark. The Zn(2+) site is built by Cys-47, His-68, Cys-98, Cys-101, Cys-104, Cys-112, and Cys-175. NAD(+)-binding positions include 200–205 (GLGGVG), Asp-224, Lys-229, 293–295 (VGV), and Arg-370.

Belongs to the zinc-containing alcohol dehydrogenase family. Dimer of identical or non-identical chains of three types; alpha, beta and gamma. Requires Zn(2+) as cofactor.

It localises to the cytoplasm. The catalysed reaction is all-trans-retinol + NAD(+) = all-trans-retinal + NADH + H(+). It carries out the reaction all-trans-4-hydroxyretinol + NAD(+) = all-trans-4-hydroxyretinal + NADH + H(+). It catalyses the reaction all-trans-4-oxoretinol + NAD(+) = all-trans-4-oxoretinal + NADH + H(+). Its function is as follows. Catalyzes the NAD-dependent oxidation of all-trans-retinol and its derivatives such as all-trans-4-hydroxyretinol and may participate in retinoid metabolism. In vitro can also catalyze the NADH-dependent reduction of all-trans-retinal and its derivatives such as all-trans-4-oxoretinal. Catalyzes in the oxidative direction with higher efficiency. Has the same affinity for all-trans-4-hydroxyretinol and all-trans-4-oxoretinal. This Homo sapiens (Human) protein is All-trans-retinol dehydrogenase [NAD(+)] ADH1B.